A 444-amino-acid chain; its full sequence is Transposase for insertion sequence element IS1557 (444 aa).

A disordered region spans residues 273–292; that stretch reads PKWGRGRPGKNAAPRPGRER.

Belongs to the transposase 12 family.

This Mycobacterium tuberculosis (strain CDC 1551 / Oshkosh) protein is Transposase for insertion sequence element IS1557.